A 676-amino-acid polypeptide reads, in one-letter code: ATP-dependent zinc metalloprotease FTSH 2, chloroplastic (676 aa).

The N-terminal 32 residues, 1–32 (MAPTSMSLAAKTPLPFSTLPSSGVAQRPVSVT), are a transit peptide targeting the chloroplast. A helical membrane pass occupies residues 155 to 175 (LLFNLIGNLAFPLILIGGLFL). 254–261 (GPPGTGKT) is an ATP binding site. Histidine 475 contacts Zn(2+). Glutamate 476 is a catalytic residue. Histidine 479 and aspartate 553 together coordinate Zn(2+).

This sequence in the N-terminal section; belongs to the AAA ATPase family. In the C-terminal section; belongs to the peptidase M41 family. It depends on Zn(2+) as a cofactor.

It localises to the plastid. It is found in the chloroplast thylakoid membrane. Probable ATP-dependent zinc metallopeptidase. In Oryza sativa subsp. japonica (Rice), this protein is ATP-dependent zinc metalloprotease FTSH 2, chloroplastic (FTSH2).